Consider the following 770-residue polypeptide: DEAD-box ATP-dependent RNA helicase 24 (770 aa).

The tract at residues 1–106 (MSKRPKLGGF…ADSDDEDDPV (106 aa)) is disordered. Positions 14–26 (RPTSYSFERSQPP) are enriched in polar residues. Acidic residues predominate over residues 34–43 (DDPDLDDIAF). A compositionally biased stretch (low complexity) spans 44–55 (SDDAAAPSDAPP). Positions 219 to 247 (KSFADCGFPVQLMNAIAKQGYEKPTTIQC) match the Q motif motif. Residues 250-425 (LPIVLSGRDI…REILTDPIRV (176 aa)) enclose the Helicase ATP-binding domain. 263–270 (AKTGSGKT) contacts ATP. A DEAD box motif is present at residues 373–376 (DEAD). Residues 436 to 599 (DIKQVVNVLP…DVPNELMDLA (164 aa)) enclose the Helicase C-terminal domain. Residues 604-613 (RFRANRDSRK) are compositionally biased toward basic and acidic residues. 3 disordered regions span residues 604 to 640 (RFRANRDSRKGGKKSGKGKGGGGGGGGGSGARGRGRG), 683 to 704 (VSASSSNTPSNSAPSRGAPSSF), and 729 to 770 (LPAP…GWDR). Over residues 621 to 635 (GKGGGGGGGGGSGAR) the composition is skewed to gly residues. Over residues 683–697 (VSASSSNTPSNSAPS) the composition is skewed to low complexity. Polar residues predominate over residues 744–753 (TVENANPNPE). Basic and acidic residues predominate over residues 754-770 (SSRDRTRERKRPSGWDR).

This sequence belongs to the DEAD box helicase family.

The enzyme catalyses ATP + H2O = ADP + phosphate + H(+). The protein is DEAD-box ATP-dependent RNA helicase 24 of Oryza sativa subsp. japonica (Rice).